The sequence spans 175 residues: B9 domain-containing protein 2 (175 aa).

The region spanning 2 to 118 (AEVHVIGQIM…DCPTWRPLGS (117 aa)) is the C2 B9-type domain.

It belongs to the B9D family. As to quaternary structure, part of the tectonic-like complex (also named B9 complex). Interacts with TUBG1.

It localises to the cytoplasm. The protein resides in the cytoskeleton. Its subcellular location is the cilium basal body. It is found in the cilium axoneme. The protein localises to the nucleus. In terms of biological role, component of the tectonic-like complex, a complex localized at the transition zone of primary cilia and acting as a barrier that prevents diffusion of transmembrane proteins between the cilia and plasma membranes. The sequence is that of B9 domain-containing protein 2 (B9D2) from Bos taurus (Bovine).